A 670-amino-acid polypeptide reads, in one-letter code: Thrombospondin-type laminin G domain and EAR repeat-containing protein (670 aa).

An N-terminal signal peptide occupies residues 1–20 (MSALLMLCAVLLLLGTPSRG). Positions 59-278 (GLQFSATEPR…KVTLGSRPPC (220 aa)) constitute a Laminin G-like domain. EAR repeat units lie at residues 314–359 (DYVE…KWTD), 361–409 (KFVS…KWSP), 413–461 (KFTL…RWNP), 465–513 (LFEA…IWLV), 515–571 (AFQL…ELNI), 575–623 (TFVK…RWQG), and 626–669 (GFVA…KLRT). N-linked (GlcNAc...) asparagine glycosylation occurs at N498.

In the organ of Corti, expression at postnatal day 1 (P1) is restricted to the basal region of the stereocilia of inner and outer hair cells (at protein level). Expressed in the organ of Corti at P1 and P7, in cochlear ganglion, stria vascularis and vestibular ends at P7, and in inferior colliculus, remaining brainstem, cerebellum, brain hemispheres and retina at P1, P7 and in the adult. Also detected in adult liver, lung, kidney, intestine and testis but not in heart or skeletal muscle.

Its subcellular location is the secreted. It localises to the cell surface. The protein resides in the cell projection. The protein localises to the stereocilium. Its function is as follows. Plays a critical role in tooth and hair follicle morphogenesis through regulation of the Notch signaling pathway. May play a role in development or function of the auditory system. The protein is Thrombospondin-type laminin G domain and EAR repeat-containing protein of Mus musculus (Mouse).